The chain runs to 562 residues: MDDNKRPLYLPFAGPAILEAPLINKGSAFSEEERIFFNLEGLVPYAIETIEEQASRAYDQFRSFNNDLDKHIYLRNIQDTNETLFYRLVQNNISEMMPIIYTPTVGLACERFSKNYRRNRGLFISYPNKDRIDDILNNSTRQKVKIIVVTDGERILGLGDQGIGGMGIPIGKLSLYTSCGGISPAYTLPITLDVGTDNPQLLEDPMYMGWRHPRIGGEEYAEFIEAFMQAVHVRWPDTLIQFEDFAQKNAMPILERYKDRYCCFNDDIQGTAAVAVGSLLAACKAAGTELNQQRIAFLGAGSAGCGIAEAIVAQMVSEGISDEQARTQVCMVDRWGLLLDNMPNLLPFQQKLAQKCTNIQNWSNFSDNISLLDVVNNTKPTVLIGVSGVPGLFTEEIIRAMHSHCARPIIFPLSNPTSRVEATPKDILHWTSGQALVATGSPFEPVVVDGETYEIAQCNNSFIFPGIGLGVLASGARHVSDAMLMASSRALAECSPLAIDGSGPLLPKLEDIHAVSKHIAFAVGKVAVEQGLTLPMSDEILQQSIEGNFWSPEYRRYKRTSF.

Residue Tyr101 is the Proton donor of the active site. Residue Arg154 coordinates NAD(+). Lys172 acts as the Proton acceptor in catalysis. Residues Glu243, Asp244, and Asp267 each coordinate a divalent metal cation. Residues Asp267 and Asn415 each contribute to the NAD(+) site.

Belongs to the malic enzymes family. In terms of assembly, homotetramer. The cofactor is Mg(2+). Mn(2+) serves as cofactor.

It catalyses the reaction (S)-malate + NAD(+) = pyruvate + CO2 + NADH. The enzyme catalyses oxaloacetate + H(+) = pyruvate + CO2. This chain is NAD-dependent malic enzyme, found in Shewanella baltica (strain OS155 / ATCC BAA-1091).